Reading from the N-terminus, the 137-residue chain is Large ribosomal subunit protein eL28 (137 aa).

Residue serine 2 is modified to N-acetylserine. Glycyl lysine isopeptide (Lys-Gly) (interchain with G-Cter in SUMO2) cross-links involve residues lysine 58 and lysine 65. At serine 115 the chain carries Phosphoserine.

This sequence belongs to the eukaryotic ribosomal protein eL28 family. In terms of assembly, component of the large ribosomal subunit.

It is found in the cytoplasm. Functionally, component of the large ribosomal subunit. The ribosome is a large ribonucleoprotein complex responsible for the synthesis of proteins in the cell. The polypeptide is Large ribosomal subunit protein eL28 (RPL28) (Homo sapiens (Human)).